Reading from the N-terminus, the 673-residue chain is DNA mismatch repair protein MutL (673 aa).

Belongs to the DNA mismatch repair MutL/HexB family.

Its function is as follows. This protein is involved in the repair of mismatches in DNA. It is required for dam-dependent methyl-directed DNA mismatch repair. May act as a 'molecular matchmaker', a protein that promotes the formation of a stable complex between two or more DNA-binding proteins in an ATP-dependent manner without itself being part of a final effector complex. This chain is DNA mismatch repair protein MutL, found in Ehrlichia chaffeensis (strain ATCC CRL-10679 / Arkansas).